Reading from the N-terminus, the 212-residue chain is MEAETSTQEVVKQVKNLPILMEDAPVGSDDHQLQYSYTFSYFMRPTGKFDPEDYASYVQPVGIMKSVEQFWSIMVHFKRPTEMCDKADIHFFKTGVKPVWEDPANCKGGKWIIRLKKGLSTRIWENLLMAIIGEQFLVGDELCGAVCSIRNQEDIISLWNRNADDTPVTNRIRETLRSVLQLPQNTVLEYKRHDDCLRDQSSYRHTTKNICK.

Cys-143 and Cys-147 are disulfide-bonded.

This sequence belongs to the eukaryotic initiation factor 4E family. In terms of assembly, eIF4F is a multi-subunit complex, the composition of which varies with external and internal environmental conditions. It is composed of at least eIF4A, eIF4E and eIF4G. eIF4E is also known to interact with other partners. Enriched in somatic cells.

Functionally, recognizes and binds the 7-methylguanosine-containing mRNA cap during an early step in the initiation of protein synthesis and facilitates ribosome binding by inducing the unwinding of the mRNAs secondary structures. All 5 eIF4E proteins bind monomethyl cap structures. Only ife-1, ife-2 and ife-5 bind trimethyl cap structures which result from trans-splicing. Translation of trimethyl cap structure mRNAs may be regulated by intracellular redox state; disulfide bonds change the width and depth of the cap-binding cavity determining selectivity to mRNA caps. This Caenorhabditis elegans protein is Eukaryotic translation initiation factor 4E-4 (ife-4).